Consider the following 363-residue polypeptide: 3-isopropylmalate dehydrogenase (363 aa).

Gly78–Glu91 contributes to the NAD(+) binding site. The substrate site is built by Arg99, Arg109, Arg138, and Asp227. Residues Asp227, Asp251, and Asp255 each contribute to the Mg(2+) site. Residue Gly285–Asn297 participates in NAD(+) binding.

Belongs to the isocitrate and isopropylmalate dehydrogenases family. LeuB type 1 subfamily. In terms of assembly, homodimer. It depends on Mg(2+) as a cofactor. Mn(2+) serves as cofactor.

It is found in the cytoplasm. It catalyses the reaction (2R,3S)-3-isopropylmalate + NAD(+) = 4-methyl-2-oxopentanoate + CO2 + NADH. The protein operates within amino-acid biosynthesis; L-leucine biosynthesis; L-leucine from 3-methyl-2-oxobutanoate: step 3/4. Catalyzes the oxidation of 3-carboxy-2-hydroxy-4-methylpentanoate (3-isopropylmalate) to 3-carboxy-4-methyl-2-oxopentanoate. The product decarboxylates to 4-methyl-2 oxopentanoate. The chain is 3-isopropylmalate dehydrogenase from Escherichia coli O157:H7.